The primary structure comprises 1207 residues: DNA-directed RNA polymerase subunit beta' (1207 aa).

Zn(2+)-binding residues include C60, C62, C75, and C78. The Mg(2+) site is built by D449, D451, and D453. Residues C822, C896, C903, and C906 each contribute to the Zn(2+) site.

This sequence belongs to the RNA polymerase beta' chain family. As to quaternary structure, the RNAP catalytic core consists of 2 alpha, 1 beta, 1 beta' and 1 omega subunit. When a sigma factor is associated with the core the holoenzyme is formed, which can initiate transcription. Mg(2+) serves as cofactor. The cofactor is Zn(2+).

It catalyses the reaction RNA(n) + a ribonucleoside 5'-triphosphate = RNA(n+1) + diphosphate. Functionally, DNA-dependent RNA polymerase catalyzes the transcription of DNA into RNA using the four ribonucleoside triphosphates as substrates. This chain is DNA-directed RNA polymerase subunit beta', found in Staphylococcus epidermidis (strain ATCC 35984 / DSM 28319 / BCRC 17069 / CCUG 31568 / BM 3577 / RP62A).